The primary structure comprises 281 residues: Alcohol dehydrogenase-related 31 kDa protein (281 aa).

11-34 (YVADCGGIALETSKVLMTKNIAKL) serves as a coordination point for NAD(+). Ser139 is a substrate binding site. Tyr152 acts as the Proton acceptor in catalysis.

The protein belongs to the short-chain dehydrogenases/reductases (SDR) family.

The polypeptide is Alcohol dehydrogenase-related 31 kDa protein (Adhr) (Drosophila ambigua (Fruit fly)).